A 492-amino-acid polypeptide reads, in one-letter code: MINNPSLLGTSIPVTKNVGSITQIIGPVLDIVFSPGKMPNIYNSLIVRGQNSAGQEINVTCEVQQLLGNNEVRAVATSATDGLMREMEVLDTGAPSSVPVGEATLGRIFNVLGEAVDNLGPVDAGLTSPIHRAAPSFIQLDTKLSIFETGIKVVDLLVPYRRGGKIGLFGGAGVGKTVLIMELINNIAKAHGGVSVFGGVGERTREGNDLYMEMKESKVINEQNIAESKVALVYGQMNEPPGARMRVGSTALTMAEYFRDVNKQDVLLFIDNIFRFVQAGSEVSALLGRMPSAVGYQPTLGTEMGTLQERITSTKEGSITSIQAVYVPADDLTDPAPATTFAHLDATTVLSRGLAAKGIYPAVDPLDSTSTMLQPWIVGEEHYETAQGVKQTLQRYKELQDIIAIPGLDELSEEDRLTVARARRIERFLSQPFFVAEVFTGSPGKYVSLRETIKGFQMILAGELDNLPEQAFYLVGNIDEVAAKAVVSQSGD.

Residue 170 to 177 (GGAGVGKT) participates in ATP binding.

It belongs to the ATPase alpha/beta chains family. In terms of assembly, F-type ATPases have 2 components, CF(1) - the catalytic core - and CF(0) - the membrane proton channel. CF(1) has five subunits: alpha(3), beta(3), gamma(1), delta(1), epsilon(1). CF(0) has four main subunits: a(1), b(1), b'(1) and c(9-12).

The protein localises to the plastid membrane. It catalyses the reaction ATP + H2O + 4 H(+)(in) = ADP + phosphate + 5 H(+)(out). Produces ATP from ADP in the presence of a proton gradient across the membrane. The catalytic sites are hosted primarily by the beta subunits. The chain is ATP synthase subunit beta, plastid from Aneura mirabilis (Parasitic liverwort).